The chain runs to 101 residues: Small ribosomal subunit protein uS14 (101 aa).

Belongs to the universal ribosomal protein uS14 family. Part of the 30S ribosomal subunit. Contacts proteins S3 and S10.

In terms of biological role, binds 16S rRNA, required for the assembly of 30S particles and may also be responsible for determining the conformation of the 16S rRNA at the A site. The polypeptide is Small ribosomal subunit protein uS14 (Pseudomonas putida (strain GB-1)).